The sequence spans 110 residues: MGNSKTNGFFTPEKYLYGIIQGLPPTLRGLAFIFFFLVAFYFFPAFWDLCGVLRGARGKGFPKRKSDANSQHSKQFWTHSDFPIWFLRVLIPTRASINSMKYPHTAALVR.

A helical membrane pass occupies residues 29–49 (GLAFIFFFLVAFYFFPAFWDL).

Its subcellular location is the membrane. This is an uncharacterized protein from Saccharomyces cerevisiae (strain ATCC 204508 / S288c) (Baker's yeast).